The chain runs to 56 residues: MAKRTAVELIALQCTGCKRRNYTTSRNRRNVQEKLELRKYCPFERRRVLHREAKIK.

This sequence belongs to the bacterial ribosomal protein bL33 family.

This chain is Large ribosomal subunit protein bL33 (rpmG), found in Treponema pallidum (strain Nichols).